The primary structure comprises 66 residues: Phylloseptin-H5 (66 aa).

An N-terminal signal peptide occupies residues 1 to 22 (MAFLKKSLFLVLFLGLVSLSIC). A propeptide spanning residues 23-44 (EEEKRETEEEENEQEDDDKSEE) is cleaved from the precursor. The tract at residues 24-44 (EEKRETEEEENEQEDDDKSEE) is disordered. A compositionally biased stretch (acidic residues) spans 30-41 (EEEENEQEDDDK). A Phenylalanine amide modification is found at Phe65.

As to expression, expressed by the skin glands.

The protein resides in the secreted. In terms of biological role, has antibacterial activity against the Gram-negative bacteria E.coli and P.aeruginosa, and the Gram-positive bacterium S.aureus. No hemolytic activity. The sequence is that of Phylloseptin-H5 (psn7) from Pithecopus hypochondrialis (Orange-legged leaf frog).